A 171-amino-acid chain; its full sequence is NADH-quinone oxidoreductase subunit I 1 (171 aa).

4Fe-4S ferredoxin-type domains follow at residues 41 to 71 (LSRD…LQAT) and 81 to 110 (EFFR…LTPD). 8 residues coordinate [4Fe-4S] cluster: cysteine 51, cysteine 54, cysteine 57, cysteine 61, cysteine 90, cysteine 93, cysteine 96, and cysteine 100.

The protein belongs to the complex I 23 kDa subunit family. In terms of assembly, NDH-1 is composed of 14 different subunits. Subunits NuoA, H, J, K, L, M, N constitute the membrane sector of the complex. [4Fe-4S] cluster serves as cofactor.

It localises to the cell inner membrane. It catalyses the reaction a quinone + NADH + 5 H(+)(in) = a quinol + NAD(+) + 4 H(+)(out). Functionally, NDH-1 shuttles electrons from NADH, via FMN and iron-sulfur (Fe-S) centers, to quinones in the respiratory chain. The immediate electron acceptor for the enzyme in this species is believed to be ubiquinone. Couples the redox reaction to proton translocation (for every two electrons transferred, four hydrogen ions are translocated across the cytoplasmic membrane), and thus conserves the redox energy in a proton gradient. The protein is NADH-quinone oxidoreductase subunit I 1 of Nitrosospira multiformis (strain ATCC 25196 / NCIMB 11849 / C 71).